Here is a 255-residue protein sequence, read N- to C-terminus: Hydroxyacylglutathione hydrolase (255 aa).

The Zn(2+) site is built by His-53, His-55, Asp-57, His-58, His-110, Asp-127, and His-165.

Belongs to the metallo-beta-lactamase superfamily. Glyoxalase II family. As to quaternary structure, monomer. Zn(2+) is required as a cofactor.

It catalyses the reaction an S-(2-hydroxyacyl)glutathione + H2O = a 2-hydroxy carboxylate + glutathione + H(+). The protein operates within secondary metabolite metabolism; methylglyoxal degradation; (R)-lactate from methylglyoxal: step 2/2. Thiolesterase that catalyzes the hydrolysis of S-D-lactoyl-glutathione to form glutathione and D-lactic acid. This is Hydroxyacylglutathione hydrolase from Xanthomonas euvesicatoria pv. vesicatoria (strain 85-10) (Xanthomonas campestris pv. vesicatoria).